We begin with the raw amino-acid sequence, 66 residues long: RQERLAKLFTEAVRRWDVSFTENLPDYMKELVSFFRKGWEDYLLGYYEEAEWLAAEYVPSLDEYIK.

The protein belongs to the terpene synthase family. Tpsd subfamily. Requires Mn(2+) as cofactor. The cofactor is K(+).

The protein resides in the cytoplasm. The enzyme catalyses (2E,6E)-farnesyl diphosphate = (E,R)-alpha-bisabolene + diphosphate. It functions in the pathway terpene metabolism; oleoresin biosynthesis. In terms of biological role, involved in defensive oleoresin formation in conifers in response to insect attack or other injury. Involved in sesquiterpene (C15) olefins biosynthesis. This Pseudotsuga menziesii (Douglas-fir) protein is Alpha-bisabolene synthase.